We begin with the raw amino-acid sequence, 1215 residues long: MNSNRKNENEIINALSIPAVSNHSAQMDLSPDARIEDSLCVAEGNNIDPFVSASTVQTGISIAGRILGVLGVPFAGQLASFYSFLVGELWPSGRDPWEIFMEHVEQIVRQQQITDSVRDTAIARLEGLGRGYRSYQQALETWLDNRNDARSRSIIRERYIALELDITTAIPLFSIRNEEVPLLMVYAQAANLHLLLLRDASLFGSEWGMSSADVNQYYQEQIRYTEEYSNHCVQWYNTGLNRLRGTTAETWVRYNQFRRDLTLGVLDLVALFPSYDTRTYPIPTTAQLTREVYTDPNGVVAGPNNSWFRNGASFSAIENAIIRQPHLYDFLTNLTIYTRRSQVGTTIMNLWAGHRITFNRIQGGSTSEMVYGAITNPVSVSDIPFVNRDVYRTVSLAGGLGSLSGIRYGLTRVDFDMIFRNHPDIVTGLFYHPGHAGIATQVKDSDTELPPETTEQPNYRAFSHLLSHISMGPTTQDVPPVYSWTHQSADRTNTINSDRITQIPLVKAHTLQSGTTVVKGPGFTGGDILRRTSGGPFAFSNVNLDFNLSQRYRARIRYASTTNLRIYVTVAGERIFAGQFDKTMDAGAPLTFQSFSYATINTAFTFPERSSSLTIGADTFSSGNEVYVDRFELIQVTATFEAESDLERARKAVNALFTSTNPRGLKTDVTDYHIDQVSNLVECLSDEFCLDKKRELLEEVKYAKRLSDERNLLQDPTFTSISGQTDRGWIGSTGISIQGGDDIFKENYVRLPGTVDECYPTYLYQKIDESQLKSYTRYQLRGYIEDSQDLEIYLIRYNAKHETLSVPGTESPWPSSGVYPSGRCGEPNRCAPRIEWNPDLDCSCRYGEKCVHHSHHFSLDIDVGCTDLNEDLGVWVIFKIKTQDGHAKLGNLEFIEEKPLLGKALSRVKRAEKKWRDKYEKLQLETKRVYTEAKESVDALFVDSQYDKLQANTNIGIIHGADKQVHRIREPYLSELPVIPSINAAIFEELEGHIFKAYSLYDARNVIKNGDFNNGLSCWNVKGHVDVQQNHHRSVLVLSEWEAEVSQKVRVCPDRGYILRVTAYKEGYGEGCVTIHEFEDNTDVLKFRNFVEEEVYPNNTVTCNDYTTNQSAEGSTDACNSYNRGYEDGYENRYEPNPSAPVNYTPTYEEGMYTDTQGYNHCVSDRGYRNHTPLPAGYVTLELEYFPETEQVWIEIGETEGTFIVGSVELLLMEE.

The protein belongs to the delta endotoxin family.

In terms of biological role, promotes colloidosmotic lysis by binding to the midgut epithelial cells of insects. Selectively toxic to Artogeia rapae but not active on Plutella xylostella. In Bacillus thuringiensis subsp. morrisoni, this protein is Pesticidal crystal protein Cry1Ka (cry1Ka).